The primary structure comprises 528 residues: Protein MGF 505-7R (528 aa).

2 ANK repeats span residues 54–83 and 261–291; these read SINDALLLAGEEGDTDVVQLLLLWEGNLHY and NIHRALSYAVSHNRRKILDYLIRQKNIPPNT.

It belongs to the asfivirus MGF 505 family. As to quaternary structure, interacts with host STING1. Interacts with host JAK1; this interaction leads to JAK1 degradation. Interacts with host JAK2; this interaction leads to JAK2 degradation. Interacts with host RELA; this interaction inhibits NF-kappa-B promoter activity.

It is found in the host cytoplasm. In terms of biological role, plays a role in virus cell tropism, and may be required for efficient virus replication in macrophages. Interferes with host NF-kappa-B promoter activity mediated by TLR8. Mechanistically, inhibits the phosphorylation and subsequent nuclear translocation of host NF-kappa-B RELA subunit downstream of TLR8. Promotes the expression of the autophagy-related protein host ULK1 to degrade host STING and inhibit the interferon response. Also inhibits JAK1- and JAK2-mediated signaling and thus negatively regulates the IFN-gamma signaling. The sequence is that of Protein MGF 505-7R from African swine fever virus (isolate Tick/Malawi/Lil 20-1/1983) (ASFV).